A 255-amino-acid chain; its full sequence is Tabinhibitin 7 (255 aa).

The first 23 residues, 1–23, serve as a signal peptide directing secretion; the sequence is MTSILVSSFLLATLVLQYATIDA. The short motif at 32–34 is the Cell attachment site element; it reads RGD. Positions 67 to 211 constitute an SCP domain; it reads LSKINDVRDH…KARALLTCNF (145 aa).

It belongs to the CRISP family. Expressed in salivary glands.

The protein localises to the secreted. Inhibits platelet aggregation induced by all agonists tested (ADP, arachidonic acid, the thromboxane A2 analog U46619, thrombin, and snake venom snaclecs (TMVA that activates platelet through GPIB, and stejnulxin that specifically acts through GPVI (GP6))). May act by competing with fibrinogen for binding to glycoprotein IIb/IIIa (ITGA2B/ITGB3). The polypeptide is Tabinhibitin 7 (Tabanus yao (Horsefly)).